A 1120-amino-acid polypeptide reads, in one-letter code: Topless-related protein 1 (1120 aa).

The 33-residue stretch at 4–36 folds into the LisH domain; sequence LSRELVFLILQFLDEEKFKETVHKLEQESGFFF. A CTLH domain is found at 34–92; the sequence is FFFNMKYFEDEVHNGNWDEVEKYLSGFTKVDDNRYSMKIFFEIRKQKYLEALDRHDRPK. Disordered stretches follow at residues 210-235 and 283-307; these read ARAP…PLGA and HPRT…SKRT. Phosphoserine is present on Ser214. 14 WD repeats span residues 353–393, 415–454, 460–501, 504–545, 548–591, 595–634, 639–678, 699–745, 755–794, 822–860, 863–903, 906–945, 999–1038, and 1052–1091; these read SQGS…RLVQ, EPVV…DMRQ, AHVG…KRYT, GHEA…SRVD, APGR…VKRT, FHKR…LLTA, GGLQ…RLLH, ERPA…EPSQ, MRVT…RNAT, NPEE…TMAT, PPPP…VKSK, GHSK…KQKS, ESAA…LRCR, and SNVH…GKWG. A disordered region spans residues 1087–1120; that stretch reads EGKWGVAPPPENGSASAVTATPSVGASASDQPQR. Polar residues predominate over residues 1099 to 1120; the sequence is GSASAVTATPSVGASASDQPQR.

In terms of assembly, tetramer. Interacts with SNC1 (via TIR domain) and HDA19. Interacts with SPL (via EAR motif). Interacts with SPEAR3/TIE1. Binds to and corepresses GAF1/IDD2. Highly expressed in stamen primordium, microsporocyte, ovule primordium and megasporocyte during sporogenesis.

The protein resides in the nucleus. Functionally, transcriptional corepressor. Activates TIR-NB-LRR R protein-mediated immune responses through repression of negative regulators such as CNGC2/DND1. Negative regulator of jasmonate responses. The polypeptide is Topless-related protein 1 (TPR1) (Arabidopsis thaliana (Mouse-ear cress)).